Consider the following 576-residue polypeptide: Catalase-peroxidase (576 aa).

The tryptophyl-tyrosyl-methioninium (Trp-Tyr) (with M-250) cross-link spans 95–224; the sequence is WHAAGSYRAA…LAAVQMGLIY (130 aa). Catalysis depends on His96, which acts as the Proton acceptor. Residues 224 to 250 constitute a cross-link (tryptophyl-tyrosyl-methioninium (Tyr-Met) (with W-95)); the sequence is YVNPEGVNGQPDPARTALHIRETFARM. Position 265 (His265) interacts with heme b.

Belongs to the peroxidase family. Peroxidase/catalase subfamily. In terms of assembly, homotetramer. The cofactor is heme b. In terms of processing, formation of the three residue Trp-Tyr-Met cross-link is important for the catalase, but not the peroxidase activity of the enzyme.

It catalyses the reaction H2O2 + AH2 = A + 2 H2O. The enzyme catalyses 2 H2O2 = O2 + 2 H2O. In terms of biological role, bifunctional enzyme with both catalase and broad-spectrum peroxidase activity. Also displays NADH oxidase, INH lyase and isonicotinoyl-NAD synthase activities. Important for stationary phase survival. In Rhodobacter capsulatus (Rhodopseudomonas capsulata), this protein is Catalase-peroxidase (katG).